A 341-amino-acid chain; its full sequence is NADH-ubiquinone oxidoreductase chain 2 (341 aa).

The next 9 membrane-spanning stretches (helical) occupy residues isoleucine 8–leucine 28, tyrosine 60–leucine 80, methionine 95–proline 115, leucine 121–isoleucine 141, isoleucine 146–leucine 166, serine 195–phenylalanine 215, phenylalanine 238–proline 258, phenylalanine 273–cysteine 293, and methionine 321–phenylalanine 341.

This sequence belongs to the complex I subunit 2 family.

Its subcellular location is the mitochondrion inner membrane. It catalyses the reaction a ubiquinone + NADH + 5 H(+)(in) = a ubiquinol + NAD(+) + 4 H(+)(out). Core subunit of the mitochondrial membrane respiratory chain NADH dehydrogenase (Complex I) that is believed to belong to the minimal assembly required for catalysis. Complex I functions in the transfer of electrons from NADH to the respiratory chain. The immediate electron acceptor for the enzyme is believed to be ubiquinone. In Drosophila melanogaster (Fruit fly), this protein is NADH-ubiquinone oxidoreductase chain 2 (mt:ND2).